Reading from the N-terminus, the 205-residue chain is 3-isopropylmalate dehydratase small subunit (205 aa).

This sequence belongs to the LeuD family. LeuD type 1 subfamily. Heterodimer of LeuC and LeuD.

The catalysed reaction is (2R,3S)-3-isopropylmalate = (2S)-2-isopropylmalate. Its pathway is amino-acid biosynthesis; L-leucine biosynthesis; L-leucine from 3-methyl-2-oxobutanoate: step 2/4. Catalyzes the isomerization between 2-isopropylmalate and 3-isopropylmalate, via the formation of 2-isopropylmaleate. The protein is 3-isopropylmalate dehydratase small subunit of Christiangramia forsetii (strain DSM 17595 / CGMCC 1.15422 / KT0803) (Gramella forsetii).